The sequence spans 331 residues: UDP-GalNAc:beta-1,3-N-acetylgalactosaminyltransferase 1 (331 aa).

Topologically, residues 1–20 are cytoplasmic; it reads MAPAVLTAIPNRMSLRSLKW. Residues 21 to 43 form a helical; Signal-anchor for type II membrane protein membrane-spanning segment; the sequence is SLLLLSLLSFLVIWYLSLPHYNV. Topologically, residues 44–331 are lumenal; the sequence is IERVNWMYFY…VMLRNTTCHY (288 aa). Residues asparagine 72, asparagine 154, asparagine 198, asparagine 212, and asparagine 326 are each glycosylated (N-linked (GlcNAc...) asparagine).

This sequence belongs to the glycosyltransferase 31 family. The cofactor is Mg(2+).

It is found in the golgi apparatus membrane. It carries out the reaction a globoside Gb3Cer (d18:1(4E)) + UDP-N-acetyl-alpha-D-galactosamine = a globoside Gb4Cer (d18:1(4E)) + UDP + H(+). It participates in protein modification; protein glycosylation. In terms of biological role, transfers N-acetylgalactosamine onto globotriaosylceramide. Plays a critical role in preimplantation stage embryonic development. In Rattus norvegicus (Rat), this protein is UDP-GalNAc:beta-1,3-N-acetylgalactosaminyltransferase 1 (B3galnt1).